Consider the following 498-residue polypeptide: ATP synthase subunit beta, chloroplastic (498 aa).

172 to 179 (GGAGVGKT) serves as a coordination point for ATP.

This sequence belongs to the ATPase alpha/beta chains family. F-type ATPases have 2 components, CF(1) - the catalytic core - and CF(0) - the membrane proton channel. CF(1) has five subunits: alpha(3), beta(3), gamma(1), delta(1), epsilon(1). CF(0) has four main subunits: a(1), b(1), b'(1) and c(9-12).

The protein resides in the plastid. It is found in the chloroplast thylakoid membrane. The enzyme catalyses ATP + H2O + 4 H(+)(in) = ADP + phosphate + 5 H(+)(out). Its function is as follows. Produces ATP from ADP in the presence of a proton gradient across the membrane. The catalytic sites are hosted primarily by the beta subunits. In Eucalyptus globulus subsp. globulus (Tasmanian blue gum), this protein is ATP synthase subunit beta, chloroplastic.